The chain runs to 341 residues: Anthranilate phosphoribosyltransferase (341 aa).

5-phospho-alpha-D-ribose 1-diphosphate-binding positions include G80, 83-84 (GD), T88, 90-93 (NIST), 108-116 (KHGNRAVSS), and S120. G80 contacts anthranilate. S92 contacts Mg(2+). An anthranilate-binding site is contributed by N111. R166 contributes to the anthranilate binding site. Mg(2+)-binding residues include D225 and E226.

This sequence belongs to the anthranilate phosphoribosyltransferase family. As to quaternary structure, homodimer. Mg(2+) is required as a cofactor.

It carries out the reaction N-(5-phospho-beta-D-ribosyl)anthranilate + diphosphate = 5-phospho-alpha-D-ribose 1-diphosphate + anthranilate. Its pathway is amino-acid biosynthesis; L-tryptophan biosynthesis; L-tryptophan from chorismate: step 2/5. Its function is as follows. Catalyzes the transfer of the phosphoribosyl group of 5-phosphorylribose-1-pyrophosphate (PRPP) to anthranilate to yield N-(5'-phosphoribosyl)-anthranilate (PRA). The sequence is that of Anthranilate phosphoribosyltransferase from Priestia megaterium (strain ATCC 12872 / QMB1551) (Bacillus megaterium).